We begin with the raw amino-acid sequence, 764 residues long: MARTHIPGFPRIGAQRELKFAQESFWRGESDEQYLLGVARELRARHWQLQQDAKLDFVTVGDFAYYDQMLNLSALLGALPQRFGFDAKTLSLARYYELARGNAAQPAMEMTKWFDTNYHYLVPELGPQTTFDGGVEWLFDEIDEALALNLPVKPVLIGPITYLWLSKSHVAGFDRLSLLPKLVIRYSRLLEKLKQRGIEWVQLDEPALCVDLPVEWLDAFSAAYDVLGTSGVKVLLATYFESAAEHAPRVAVLPVAGVHLDLVRAPQQLDAWRAALPKHAVLSAGVIDGRNIWRADLGEIFESLQALHAEFGERLWVSSSCSLLHVPVSLDAEQKLDADLKSWLAFATEKLGEVATLALALRDPAAAEATLAAADRALDARRHSSTVVNALVQKRVAAVSSAMADRQSPFAERNRLQREALGLPLLPTTTIGSFPQTPAIRQARAAYKRGELRALDYLQRMRAEIEIAVRKQEELGLDVLVHGEAERNDMVEYFGEQLWGYAFTENGWVQSYGSRCVKPPIIYGDVYRPEPMTVETTRYAQSLTQRLMKGMLTGPVTMLQWSFVRDDQPRSTTALQLALAIRDEVVDLEKAGIRIIQIDEPAFREGLPLRRGDWAAYLEWATRVFRISAAGVADQTQIHTHMCYSEFNDILPSIAAMDADVITIETSRSAMELLDGFGAFAYPNEIGPGVYDIHSPRVPDAQAMQRLLERACEVIPAERLWVNPDCGLKTRGWPETEAALTNMVRAAKALRAKLAAKQPDEVTA.

Residues 16–19 and Lys112 each bind 5-methyltetrahydropteroyltri-L-glutamate; that span reads RELK. L-homocysteine is bound by residues 431–433 and Glu484; that span reads IGS. L-methionine-binding positions include 431–433 and Glu484; that span reads IGS. Residues 515–516 and Trp561 contribute to the 5-methyltetrahydropteroyltri-L-glutamate site; that span reads RC. Asp599 lines the L-homocysteine pocket. Asp599 contributes to the L-methionine binding site. 5-methyltetrahydropteroyltri-L-glutamate is bound at residue Glu605. Residues His641, Cys643, and Glu665 each contribute to the Zn(2+) site. His694 (proton donor) is an active-site residue. Cys726 is a Zn(2+) binding site.

Belongs to the vitamin-B12 independent methionine synthase family. Zn(2+) is required as a cofactor.

The catalysed reaction is 5-methyltetrahydropteroyltri-L-glutamate + L-homocysteine = tetrahydropteroyltri-L-glutamate + L-methionine. It participates in amino-acid biosynthesis; L-methionine biosynthesis via de novo pathway; L-methionine from L-homocysteine (MetE route): step 1/1. In terms of biological role, catalyzes the transfer of a methyl group from 5-methyltetrahydrofolate to homocysteine resulting in methionine formation. The sequence is that of 5-methyltetrahydropteroyltriglutamate--homocysteine methyltransferase from Paraburkholderia phytofirmans (strain DSM 17436 / LMG 22146 / PsJN) (Burkholderia phytofirmans).